Consider the following 692-residue polypeptide: Elongation factor G (692 aa).

The tr-type G domain maps to 8 to 283 (NRIRNIGIAA…AVIDYLPAPT (276 aa)). GTP-binding positions include 17–24 (AHIDAGKT), 81–85 (DTPGH), and 135–138 (NKMD).

This sequence belongs to the TRAFAC class translation factor GTPase superfamily. Classic translation factor GTPase family. EF-G/EF-2 subfamily.

The protein localises to the cytoplasm. In terms of biological role, catalyzes the GTP-dependent ribosomal translocation step during translation elongation. During this step, the ribosome changes from the pre-translocational (PRE) to the post-translocational (POST) state as the newly formed A-site-bound peptidyl-tRNA and P-site-bound deacylated tRNA move to the P and E sites, respectively. Catalyzes the coordinated movement of the two tRNA molecules, the mRNA and conformational changes in the ribosome. This chain is Elongation factor G (fusA), found in Helicobacter pylori (strain J99 / ATCC 700824) (Campylobacter pylori J99).